A 517-amino-acid polypeptide reads, in one-letter code: GMP synthase [glutamine-hydrolyzing] (517 aa).

Residues 9-199 (RILILDFGSQ…VLGVCGCERL (191 aa)) enclose the Glutamine amidotransferase type-1 domain. The Nucleophile role is filled by Cys86. Catalysis depends on residues His173 and Glu175. Residues 200–392 (WTSESIIEDA…LGLPYNMLYR (193 aa)) enclose the GMPS ATP-PPase domain. 227 to 233 (SGGVDSS) contributes to the ATP binding site.

As to quaternary structure, homodimer.

The catalysed reaction is XMP + L-glutamine + ATP + H2O = GMP + L-glutamate + AMP + diphosphate + 2 H(+). The protein operates within purine metabolism; GMP biosynthesis; GMP from XMP (L-Gln route): step 1/1. Its function is as follows. Catalyzes the synthesis of GMP from XMP. This is GMP synthase [glutamine-hydrolyzing] from Vibrio parahaemolyticus serotype O3:K6 (strain RIMD 2210633).